Reading from the N-terminus, the 220-residue chain is Protein-L-isoaspartate O-methyltransferase (220 aa).

Residue Ser68 is part of the active site.

This sequence belongs to the methyltransferase superfamily. L-isoaspartyl/D-aspartyl protein methyltransferase family.

Its subcellular location is the cytoplasm. The enzyme catalyses [protein]-L-isoaspartate + S-adenosyl-L-methionine = [protein]-L-isoaspartate alpha-methyl ester + S-adenosyl-L-homocysteine. Its function is as follows. Catalyzes the methyl esterification of L-isoaspartyl residues in peptides and proteins that result from spontaneous decomposition of normal L-aspartyl and L-asparaginyl residues. It plays a role in the repair and/or degradation of damaged proteins. The sequence is that of Protein-L-isoaspartate O-methyltransferase from Dictyoglomus thermophilum (strain ATCC 35947 / DSM 3960 / H-6-12).